We begin with the raw amino-acid sequence, 248 residues long: Ras-like protein family member 11B (248 aa).

Residues Ala-29–Thr-246 form a small GTPase-like region. GTP is bound by residues Gly-40–Thr-47, Asp-87–His-94, and Asn-152–Asp-155. The interval Gln-205–Asn-226 is disordered.

The protein belongs to the small GTPase superfamily. Ras family. As to expression, widely expressed with highest levels in placenta and primary macrophages.

The enzyme catalyses GTP + H2O = GDP + phosphate + H(+). The polypeptide is Ras-like protein family member 11B (Homo sapiens (Human)).